The primary structure comprises 424 residues: UDP-N-acetylglucosamine 1-carboxyvinyltransferase (424 aa).

22 to 23 (KN) provides a ligand contact to phosphoenolpyruvate. Arg-93 contributes to the UDP-N-acetyl-alpha-D-glucosamine binding site. The active-site Proton donor is the Cys-117. Cys-117 is modified (2-(S-cysteinyl)pyruvic acid O-phosphothioketal). Residues 122–126 (RPIDL), Asp-307, and Val-329 each bind UDP-N-acetyl-alpha-D-glucosamine.

This sequence belongs to the EPSP synthase family. MurA subfamily.

It is found in the cytoplasm. The catalysed reaction is phosphoenolpyruvate + UDP-N-acetyl-alpha-D-glucosamine = UDP-N-acetyl-3-O-(1-carboxyvinyl)-alpha-D-glucosamine + phosphate. It participates in cell wall biogenesis; peptidoglycan biosynthesis. Its function is as follows. Cell wall formation. Adds enolpyruvyl to UDP-N-acetylglucosamine. This Chlorobium luteolum (strain DSM 273 / BCRC 81028 / 2530) (Pelodictyon luteolum) protein is UDP-N-acetylglucosamine 1-carboxyvinyltransferase.